The following is a 179-amino-acid chain: Large ribosomal subunit protein uL5 (179 aa).

This sequence belongs to the universal ribosomal protein uL5 family. Part of the 50S ribosomal subunit; part of the 5S rRNA/L5/L18/L25 subcomplex. Contacts the 5S rRNA and the P site tRNA. Forms a bridge to the 30S subunit in the 70S ribosome.

Functionally, this is one of the proteins that bind and probably mediate the attachment of the 5S RNA into the large ribosomal subunit, where it forms part of the central protuberance. In the 70S ribosome it contacts protein S13 of the 30S subunit (bridge B1b), connecting the 2 subunits; this bridge is implicated in subunit movement. Contacts the P site tRNA; the 5S rRNA and some of its associated proteins might help stabilize positioning of ribosome-bound tRNAs. In Bordetella avium (strain 197N), this protein is Large ribosomal subunit protein uL5.